Reading from the N-terminus, the 221-residue chain is Probable septum site-determining protein MinC (221 aa).

This sequence belongs to the MinC family. Interacts with MinD and FtsZ.

Its function is as follows. Cell division inhibitor that blocks the formation of polar Z ring septums. Rapidly oscillates between the poles of the cell to destabilize FtsZ filaments that have formed before they mature into polar Z rings. Prevents FtsZ polymerization. The protein is Probable septum site-determining protein MinC of Prochlorococcus marinus (strain SARG / CCMP1375 / SS120).